Reading from the N-terminus, the 472-residue chain is Nuclear receptor subfamily 0 group B member 1 (472 aa).

3 tandem repeats follow at residues 1–67, 68–135, and 136–202. The tract at residues 1–255 is 4 X 67 AA tandem repeats; that stretch reads MAGEDHPWHG…RPIALKDPQV (255 aa). 3 consecutive short sequence motifs (LXXLL motif) follow at residues 13–17, 80–84, and 148–152; these read LYNLL, LYSML, and LYSLL. Residues 190–471 enclose the NR LBD domain; that stretch reads QSTQAMAFLY…DMMLEMLCAK (282 aa). Residues 203–255 form a 4; truncated repeat; that stretch reads VCCEEQPQQSSVASDTPVRADQTPAAPQEQPRAPWWDTSSGVQRPIALKDPQV. Disordered stretches follow at residues 214-237 and 326-345; these read VASD…RAPW and RRQE…EQPQ. Residues 463–468 carry the AF-2 motif motif; the sequence is MMLEML.

This sequence belongs to the nuclear hormone receptor family. NR0 subfamily. Homodimer. Interacts with NR5A1, NR5A2, NR0B2 and with COPS2. Interacts with ESRRB; represses ESRRB activity at the GATA6 promoter.

The protein resides in the nucleus. The protein localises to the cytoplasm. In terms of biological role, nuclear receptor that lacks a DNA-binding domain and acts as a corepressor that inhibits the transcriptional activity of other nuclear receptors through heterodimeric interactions. Component of a cascade required for the development of the hypothalamic-pituitary-adrenal-gonadal axis. May also have a role in the development of the embryo and in the maintenance of embryonic stem cell pluripotency. The polypeptide is Nuclear receptor subfamily 0 group B member 1 (Nr0b1) (Rattus norvegicus (Rat)).